The chain runs to 245 residues: 2,3-bisphosphoglycerate-dependent phosphoglycerate mutase (245 aa).

Residues 8–15, 21–22, arginine 60, 87–90, lysine 98, 114–115, and 183–184 each bind substrate; these read RHGQSLWN, TG, ERHY, RR, and GN. Histidine 9 acts as the Tele-phosphohistidine intermediate in catalysis. The active-site Proton donor/acceptor is the glutamate 87.

Belongs to the phosphoglycerate mutase family. BPG-dependent PGAM subfamily.

It catalyses the reaction (2R)-2-phosphoglycerate = (2R)-3-phosphoglycerate. The protein operates within carbohydrate degradation; glycolysis; pyruvate from D-glyceraldehyde 3-phosphate: step 3/5. Its function is as follows. Catalyzes the interconversion of 2-phosphoglycerate and 3-phosphoglycerate. This is 2,3-bisphosphoglycerate-dependent phosphoglycerate mutase from Bacillus cereus (strain B4264).